The chain runs to 284 residues: UTP--glucose-1-phosphate uridylyltransferase (284 aa).

The protein belongs to the UDPGP type 2 family.

The enzyme catalyses alpha-D-glucose 1-phosphate + UTP + H(+) = UDP-alpha-D-glucose + diphosphate. This Komagataeibacter xylinus (Gluconacetobacter xylinus) protein is UTP--glucose-1-phosphate uridylyltransferase (celA).